Reading from the N-terminus, the 214-residue chain is Phosphatidylserine decarboxylase proenzyme (214 aa).

Ser182 serves as the catalytic Schiff-base intermediate with substrate; via pyruvic acid. Ser182 is subject to Pyruvic acid (Ser); by autocatalysis.

This sequence belongs to the phosphatidylserine decarboxylase family. PSD-A subfamily. In terms of assembly, heterodimer of a large membrane-associated beta subunit and a small pyruvoyl-containing alpha subunit. Pyruvate is required as a cofactor. Post-translationally, is synthesized initially as an inactive proenzyme. Formation of the active enzyme involves a self-maturation process in which the active site pyruvoyl group is generated from an internal serine residue via an autocatalytic post-translational modification. Two non-identical subunits are generated from the proenzyme in this reaction, and the pyruvate is formed at the N-terminus of the alpha chain, which is derived from the carboxyl end of the proenzyme. The post-translation cleavage follows an unusual pathway, termed non-hydrolytic serinolysis, in which the side chain hydroxyl group of the serine supplies its oxygen atom to form the C-terminus of the beta chain, while the remainder of the serine residue undergoes an oxidative deamination to produce ammonia and the pyruvoyl prosthetic group on the alpha chain.

The protein resides in the cell membrane. It catalyses the reaction a 1,2-diacyl-sn-glycero-3-phospho-L-serine + H(+) = a 1,2-diacyl-sn-glycero-3-phosphoethanolamine + CO2. Its pathway is phospholipid metabolism; phosphatidylethanolamine biosynthesis; phosphatidylethanolamine from CDP-diacylglycerol: step 2/2. In terms of biological role, catalyzes the formation of phosphatidylethanolamine (PtdEtn) from phosphatidylserine (PtdSer). This is Phosphatidylserine decarboxylase proenzyme from Solidesulfovibrio magneticus (strain ATCC 700980 / DSM 13731 / RS-1) (Desulfovibrio magneticus).